A 399-amino-acid chain; its full sequence is Argininosuccinate synthase (399 aa).

8–16 (AYSGGLDTS) is an ATP binding site. Position 87 (Y87) interacts with L-citrulline. G117 lines the ATP pocket. Positions 119, 123, and 124 each coordinate L-aspartate. N123 contributes to the L-citrulline binding site. 4 residues coordinate L-citrulline: R127, S175, E259, and Y271.

Belongs to the argininosuccinate synthase family. Type 1 subfamily. Homotetramer.

It localises to the cytoplasm. The enzyme catalyses L-citrulline + L-aspartate + ATP = 2-(N(omega)-L-arginino)succinate + AMP + diphosphate + H(+). The protein operates within amino-acid biosynthesis; L-arginine biosynthesis; L-arginine from L-ornithine and carbamoyl phosphate: step 2/3. This Corynebacterium diphtheriae (strain ATCC 700971 / NCTC 13129 / Biotype gravis) protein is Argininosuccinate synthase.